The primary structure comprises 551 residues: MAAEAKNDEQQDIARRLAKFPSTIWGCSFASFSLKDSEIESYTQQVEELKGKVKDMLMQSTKEITQNIEVINLLCRLGVSYHFESEIEQQLNLIFASLPSFLNDNGHLDLYTVALLFRVLRQHGRKVPCDVFNKYKDDNGEFKKDITSDVKGLLSLYEASVVSVHGEEILDEALVFTKQHLETLAAQVSPHFEQHIRNALLCPVHYGMERLQARLYISFYEEDESRNEILLKFAKLDFNRLQLLYREELAIVSRWWKDLDLTERLSYARDRIVEVYVWALGCVGSQPQFASSRLLVAKFTQTAMTVDDTYDAYGTIGELRLFTAAFERCSIDAIHELPEYMQYLYKAILKLFEETENDANEGSSYKTSYAKEMFKELTRADLQEGEWFNSLYVPAFDEYLHNASITTTGELLTAAFLLGLKEASMKEIVWVRDAPKIVRNAKLFARLLDDVATHEEEQKRGDCPSSVECYMNEYGVPKEKAYEEIKKILATSWKDINEDYMKQHRVSRTVVNYFINFARMSNFVYKVRDAYTYSTHLKTYVATLFLQPLPV.

Mg(2+)-binding residues include aspartate 307, aspartate 311, and glutamate 457. A DDXXD motif motif is present at residues 307-311 (DDTYD).

This sequence belongs to the terpene synthase family. Requires Mg(2+) as cofactor.

Functionally, probable sesquiterpene synthase. This is Probable terpene synthase 8 (TPS8) from Ricinus communis (Castor bean).